The chain runs to 1380 residues: Carboxypeptidase D (1380 aa).

An N-terminal signal peptide occupies residues 1–31 (MASGRDERPPWRLGRLLLLMCLLLLGSSARA). Topologically, residues 32–1299 (AHIKKAEATT…DNRIFGLPRE (1268 aa)) are extracellular. The 324-residue stretch at 57–380 (RYYHEEELES…ESLITLIEKV (324 aa)) folds into the Peptidase M14 1 domain. Residues His139 and Glu142 each coordinate Zn(2+). Positions 162–164 (RGD) match the Cell attachment site motif. Residue Asn172 is glycosylated (N-linked (GlcNAc...) asparagine). The tract at residues 190 to 232 (AREGDCGFGDGGPSGASGRDNSRGRDLNRSFPDQFSTGEPPAL) is disordered. The segment covering 195–204 (CGFGDGGPSG) has biased composition (gly residues). Asn217 is a glycosylation site (N-linked (GlcNAc...) asparagine). His257 is a binding site for Zn(2+). A Phosphotyrosine modification is found at Tyr265. A Phosphoserine modification is found at Ser270. Catalysis depends on Glu350, which acts as the Proton donor/acceptor. 4 N-linked (GlcNAc...) asparagine glycosylation sites follow: Asn399, Asn410, Asn429, and Asn522. Residues 502 to 792 (HHHHFPDMEI…RSLIQFMKQV (291 aa)) form the Peptidase M14 2 domain. Zn(2+) is bound by residues His564 and Glu567. Asn626 carries N-linked (GlcNAc...) asparagine glycosylation. A Zn(2+)-binding site is contributed by His671. Glu762 (proton donor/acceptor) is an active-site residue. 4 N-linked (GlcNAc...) asparagine glycosylation sites follow: Asn811, Asn855, Asn867, and Asn879. Residues 874 to 899 (STDSNNESKKGKGASSSTNDASDPTT) form a disordered region. Positions 887-897 (ASSSTNDASDP) are enriched in polar residues. In terms of domain architecture, Peptidase M14 3 spans 932–1211 (RYHSYKDLSE…RSLLSMLVEV (280 aa)). Residues Asn955, Asn978, Asn1070, and Asn1142 are each glycosylated (N-linked (GlcNAc...) asparagine). Residues 1300–1320 (LVVTVSGATMSALILTACIIW) traverse the membrane as a helical segment. Residues Cys1317, Cys1321, and Cys1323 are each lipidated (S-palmitoyl cysteine). At 1321-1380 (CICSIKSNRHKDGFHRLRQHHDEYEDEIRMMSTGSKKSLLSHEFQDETDTEEETLYSSKH) the chain is on the cytoplasmic side. Phosphoserine occurs at positions 1358 and 1361. Positions 1359 to 1380 (LLSHEFQDETDTEEETLYSSKH) are disordered. Residues Thr1368 and Thr1370 each carry the phosphothreonine modification.

It belongs to the peptidase M14 family. Zn(2+) serves as cofactor. In terms of tissue distribution, highly expressed in placenta, pancreas and hepatoma cells. Lower levels found in skeletal muscle, heart and colon carcinoma and melanoma cell lines.

It localises to the cell membrane. The catalysed reaction is Releases C-terminal Arg and Lys from polypeptides.. The chain is Carboxypeptidase D (CPD) from Homo sapiens (Human).